Here is a 228-residue protein sequence, read N- to C-terminus: Octanoyltransferase (228 aa).

The BPL/LPL catalytic domain maps to 30 to 214 (KKIGDTLLLL…YFGKVFGKSL (185 aa)). Residues 75–82 (RGGDVTYH), 144–146 (AIG), and 157–159 (GFA) each bind substrate. C175 functions as the Acyl-thioester intermediate in the catalytic mechanism.

The protein belongs to the LipB family.

The protein resides in the cytoplasm. The enzyme catalyses octanoyl-[ACP] + L-lysyl-[protein] = N(6)-octanoyl-L-lysyl-[protein] + holo-[ACP] + H(+). It functions in the pathway protein modification; protein lipoylation via endogenous pathway; protein N(6)-(lipoyl)lysine from octanoyl-[acyl-carrier-protein]: step 1/2. Catalyzes the transfer of endogenously produced octanoic acid from octanoyl-acyl-carrier-protein onto the lipoyl domains of lipoate-dependent enzymes. Lipoyl-ACP can also act as a substrate although octanoyl-ACP is likely to be the physiological substrate. This chain is Octanoyltransferase, found in Caldicellulosiruptor bescii (strain ATCC BAA-1888 / DSM 6725 / KCTC 15123 / Z-1320) (Anaerocellum thermophilum).